A 185-amino-acid chain; its full sequence is MTTPNKTPPGADPKQLERTATVREIGSQAVWSLSSCKPGFGVDQLRDDNLETYWQSDGSQPHLVNIQFRRKTTVKTLCIYADYKSDESYTPSKISVRVGNNFHNLQEIRQLELVEPSGWIHVPLTDNHKKPTRTFMIQIAVLANHQNGRDTHMRQIKIYTPVEESSIGKFPRCTTIDFMMYRSIR.

T2 bears the N-acetylthreonine mark. Residues 2-185 form the DOC domain; the sequence is TTPNKTPPGA…IDFMMYRSIR (184 aa). N6-acetyllysine is present on K169.

This sequence belongs to the APC10 family. As to quaternary structure, the mammalian APC/C is composed at least of 14 distinct subunits ANAPC1, ANAPC2, CDC27/APC3, ANAPC4, ANAPC5, CDC16/APC6, ANAPC7, CDC23/APC8, ANAPC10, ANAPC11, CDC26/APC12, ANAPC13, ANAPC15 and ANAPC16 that assemble into a complex of at least 19 chains with a combined molecular mass of around 1.2 MDa; APC/C interacts with FZR1 and FBXO5. The C-terminus of APC10 binds to CDC27/APC3. Interacts with PIWIL1; interaction only takes place when PIWIL1 binds piRNA. Interacts with FBXO43; the interaction is direct.

The protein operates within protein modification; protein ubiquitination. Its function is as follows. Component of the anaphase promoting complex/cyclosome (APC/C), a cell cycle-regulated E3 ubiquitin ligase that controls progression through mitosis and the G1 phase of the cell cycle. The APC/C complex acts by mediating ubiquitination and subsequent degradation of target proteins: it mainly mediates the formation of 'Lys-11'-linked polyubiquitin chains and, to a lower extent, the formation of 'Lys-48'- and 'Lys-63'-linked polyubiquitin chains. The APC/C complex catalyzes assembly of branched 'Lys-11'-/'Lys-48'-linked branched ubiquitin chains on target proteins. In Mus musculus (Mouse), this protein is Anaphase-promoting complex subunit 10 (Anapc10).